A 188-amino-acid chain; its full sequence is Large ribosomal subunit protein eL18A (188 aa).

The disordered stretch occupies residues 153–188; sequence GKAPSTPHSRTKPYVLSKGRKFERARGRRASRGYKN. Residues 178–188 are compositionally biased toward basic residues; it reads RGRRASRGYKN.

Belongs to the eukaryotic ribosomal protein eL18 family. In terms of assembly, component of the large ribosomal subunit.

The protein resides in the cytoplasm. Functionally, component of the large ribosomal subunit. The ribosome is a large ribonucleoprotein complex responsible for the synthesis of proteins in the cell. The polypeptide is Large ribosomal subunit protein eL18A (rpl18-a) (Xenopus laevis (African clawed frog)).